A 425-amino-acid polypeptide reads, in one-letter code: Actin-related protein 3 (425 aa).

It belongs to the actin family. ARP3 subfamily. In terms of assembly, component of the Arp2/3 complex, at least composed of arx-1, arx-2, arx-4 and arx-6.

It is found in the cytoplasm. The protein resides in the cytoskeleton. Functions as ATP-binding component of the Arp2/3 complex which is involved in regulation of actin polymerization and together with an activating nucleation-promoting factor (NPF) mediates the formation of branched actin networks. Seems to contact the pointed end of the daughter actin filament. Plays a role in time-dependent memory loss and the retention of conditioned behavior over time. This Caenorhabditis elegans protein is Actin-related protein 3.